A 186-amino-acid polypeptide reads, in one-letter code: Threonylcarbamoyl-AMP synthase (186 aa).

A YrdC-like domain is found at 2–186; that stretch reads VSNLQQVVKA…ARTEQLLRQG (185 aa).

Belongs to the SUA5 family. TsaC subfamily.

The protein resides in the cytoplasm. It carries out the reaction L-threonine + hydrogencarbonate + ATP = L-threonylcarbamoyladenylate + diphosphate + H2O. Functionally, required for the formation of a threonylcarbamoyl group on adenosine at position 37 (t(6)A37) in tRNAs that read codons beginning with adenine. Catalyzes the conversion of L-threonine, HCO(3)(-)/CO(2) and ATP to give threonylcarbamoyl-AMP (TC-AMP) as the acyladenylate intermediate, with the release of diphosphate. The sequence is that of Threonylcarbamoyl-AMP synthase from Vibrio vulnificus (strain CMCP6).